Consider the following 257-residue polypeptide: Urease accessory protein UreD 3 (257 aa).

The disordered stretch occupies residues 1–22 (MSVRATARLRAEPDGRDGTALP).

This sequence belongs to the UreD family. As to quaternary structure, ureD, UreF and UreG form a complex that acts as a GTP-hydrolysis-dependent molecular chaperone, activating the urease apoprotein by helping to assemble the nickel containing metallocenter of UreC. The UreE protein probably delivers the nickel.

Its subcellular location is the cytoplasm. Functionally, required for maturation of urease via the functional incorporation of the urease nickel metallocenter. The sequence is that of Urease accessory protein UreD 3 from Streptomyces griseus subsp. griseus (strain JCM 4626 / CBS 651.72 / NBRC 13350 / KCC S-0626 / ISP 5235).